The following is a 341-amino-acid chain: Glycerol-3-phosphate dehydrogenase [NAD(P)+] (341 aa).

NADPH-binding residues include Ser11, Trp12, Arg33, and Lys106. The sn-glycerol 3-phosphate site is built by Lys106, Gly137, and Ser139. Residue Ala141 participates in NADPH binding. 5 residues coordinate sn-glycerol 3-phosphate: Lys192, Asp245, Ser255, Arg256, and Asn257. Lys192 functions as the Proton acceptor in the catalytic mechanism. Arg256 contributes to the NADPH binding site. Val280 and Glu282 together coordinate NADPH.

Belongs to the NAD-dependent glycerol-3-phosphate dehydrogenase family.

Its subcellular location is the cytoplasm. It carries out the reaction sn-glycerol 3-phosphate + NAD(+) = dihydroxyacetone phosphate + NADH + H(+). The enzyme catalyses sn-glycerol 3-phosphate + NADP(+) = dihydroxyacetone phosphate + NADPH + H(+). The protein operates within membrane lipid metabolism; glycerophospholipid metabolism. Its function is as follows. Catalyzes the reduction of the glycolytic intermediate dihydroxyacetone phosphate (DHAP) to sn-glycerol 3-phosphate (G3P), the key precursor for phospholipid synthesis. This chain is Glycerol-3-phosphate dehydrogenase [NAD(P)+], found in Bacillus cytotoxicus (strain DSM 22905 / CIP 110041 / 391-98 / NVH 391-98).